A 621-amino-acid chain; its full sequence is Pentatricopeptide repeat-containing protein At3g48250, chloroplastic (621 aa).

The N-terminal 67 residues, 1–67 (MYRSMAILSS…SKPDSMLQLV (67 aa)), are a transit peptide targeting the chloroplast. PPR repeat units follow at residues 122–156 (STPL…GFYL), 157–194 (DEDT…NAMS), 262–296 (STVT…GYDM), 297–331 (DLDT…PFKP), 332–368 (SIQD…GKSL), 369–403 (SKAV…GYEP), 404–438 (DNIT…GCFP), 439–473 (DIKT…GFDI), 474–509 (DSNL…NVKP), and 510–544 (WQST…NYPA).

This sequence belongs to the PPR family. P subfamily.

The protein localises to the plastid. The protein resides in the chloroplast. In Arabidopsis thaliana (Mouse-ear cress), this protein is Pentatricopeptide repeat-containing protein At3g48250, chloroplastic.